The chain runs to 487 residues: Calcium-binding tyrosine phosphorylation-regulated protein (487 aa).

The RIIa domain maps to 12–49; it reads YGLKTLLEGISRAVLKTNPSDINQFAAAYFQELTMYRG. Composition is skewed to basic and acidic residues over residues 78-91 and 101-117; these read KKLE…KTSV and KSTD…EYSD. Disordered regions lie at residues 78–163, 243–271, and 420–487; these read KKLE…AVSP, VDLG…QEPP, and IVSD…ATAE. Low complexity predominate over residues 140–152; it reads SSSKPATPKATTP. Polar residues-rich tracts occupy residues 420–436 and 455–464; these read IVSD…NSVP and SGTSVKSSSG. Positions 478 to 487 are enriched in acidic residues; sequence IEPEGEATAE.

In terms of assembly, interacts with FSCB. Phosphorylated on tyrosine residues during in vitro capacitation. Dephosphorylation affects its ability to bind calcium.

The protein resides in the cytoplasm. It localises to the cytoskeleton. Its subcellular location is the cell projection. The protein localises to the cilium. It is found in the flagellum. In terms of biological role, may function as a regulator of both motility- and head-associated functions such as capacitation and the acrosome reaction. May bind calcium in vitro. This chain is Calcium-binding tyrosine phosphorylation-regulated protein (CABYR), found in Macaca fascicularis (Crab-eating macaque).